A 341-amino-acid chain; its full sequence is S-adenosylmethionine:tRNA ribosyltransferase-isomerase (341 aa).

It belongs to the QueA family. In terms of assembly, monomer.

It localises to the cytoplasm. The catalysed reaction is 7-aminomethyl-7-carbaguanosine(34) in tRNA + S-adenosyl-L-methionine = epoxyqueuosine(34) in tRNA + adenine + L-methionine + 2 H(+). The protein operates within tRNA modification; tRNA-queuosine biosynthesis. In terms of biological role, transfers and isomerizes the ribose moiety from AdoMet to the 7-aminomethyl group of 7-deazaguanine (preQ1-tRNA) to give epoxyqueuosine (oQ-tRNA). The sequence is that of S-adenosylmethionine:tRNA ribosyltransferase-isomerase from Clostridium beijerinckii (strain ATCC 51743 / NCIMB 8052) (Clostridium acetobutylicum).